The primary structure comprises 180 residues: Inosine/xanthosine triphosphatase (180 aa).

8-13 contributes to the substrate binding site; it reads TTNPAK. Positions 38 and 68 each coordinate Mg(2+). Residue 68–69 coordinates substrate; it reads EA.

This sequence belongs to the YjjX NTPase family. In terms of assembly, homodimer. It depends on Mg(2+) as a cofactor. The cofactor is Mn(2+).

It catalyses the reaction XTP + H2O = XDP + phosphate + H(+). The enzyme catalyses ITP + H2O = IDP + phosphate + H(+). Its function is as follows. Phosphatase that hydrolyzes non-canonical purine nucleotides such as XTP and ITP to their respective diphosphate derivatives. Probably excludes non-canonical purines from DNA/RNA precursor pool, thus preventing their incorporation into DNA/RNA and avoiding chromosomal lesions. The protein is Inosine/xanthosine triphosphatase of Yersinia pestis bv. Antiqua (strain Antiqua).